A 714-amino-acid chain; its full sequence is Forkhead box protein P2 (714 aa).

Over residues 1 to 28 the composition is skewed to polar residues; sequence MMQESATETISNSSMNQNGMSTLSSQLD. Disordered stretches follow at residues 1–45 and 284–338; these read MMQE…SEVS and KHGG…TGAS. Residues 291–304 are compositionally biased toward low complexity; that stretch reads TTNNSSSTTSSTTS. Polar residues predominate over residues 314–323; sequence SIVNGQSSVL. Positions 325 to 336 are enriched in basic and acidic residues; it reads ARRDSSSHEETG. The C2H2-type zinc-finger motif lies at 345-370; it reads GVCKWPGCESICEDFGQFLKHLNNEH. The leucine-zipper stretch occupies residues 387–408; that stretch reads VQQLEIQLSKERERLQAMMTHL. Residues 421 to 425 form a CTBP1-binding region; the sequence is PLNLV. Low complexity predominate over residues 437-458; the sequence is TSPQSLPQTPTTPTAPVTPITQ. Residues 437 to 464 form a disordered region; that stretch reads TSPQSLPQTPTTPTAPVTPITQGPSVIT. A DNA-binding region (fork-head) is located at residues 503-593; the sequence is RPPFTYATLI…SQKITGSPTL (91 aa). 2 disordered regions span residues 648–667 and 677–714; these read LDHI…QPHI and VIAE…EDLE. Acidic residues predominate over residues 698–714; it reads LEDDREIEEEPLSEDLE.

As to quaternary structure, forms homodimers and heterodimers with FOXP1 and FOXP4. Dimerization is required for DNA-binding. Interacts with CTBP1. Interacts with FOXP1. Interacts with TBR1. Interacts with ZMYM2.

It is found in the nucleus. Its function is as follows. Transcriptional repressor that may play a role in the specification and differentiation of lung epithelium. May also play a role in developing neural, gastrointestinal and cardiovascular tissues. Can act with CTBP1 to synergistically repress transcription but CTPBP1 is not essential. Plays a role in synapse formation by regulating SRPX2 levels. This is Forkhead box protein P2 (FOXP2) from Macaca mulatta (Rhesus macaque).